The following is a 237-amino-acid chain: Regulator of G-protein signaling 9-binding protein (237 aa).

The Cytoplasmic segment spans residues 1–214 (MAKEECKALL…TGPCDLSKAK (214 aa)). Coiled-coil stretches lie at residues 29–58 (GSAD…RLRL) and 144–169 (VEDL…MKVN). The interval 153 to 202 (EILQVGEMIQDMEMKVNVPRWTVQARQAAGAELLSSASAGVSSVGGVSVE) is SNARE-like. A helical; Anchor for type IV membrane protein transmembrane segment spans residues 215–234 (AATIFSAVLLAAVALAVCVA). At 235-237 (KLS) the chain is on the extracellular side.

Belongs to the RGS7BP/RGS9BP family. In terms of assembly, specifically interacts with isoform RGS9-1 of RGS9. Component of the RGS9-1-Gbeta5 complex composed of RGS9-1, Gbeta5 (GNB5) and RGS9BP. In terms of tissue distribution, specifically expressed in the retina. Only present in photoreceptors (at protein level).

The protein resides in the membrane. In terms of biological role, regulator of G protein-coupled receptor (GPCR) signaling in phototransduction. Participates in the recovery phase of visual transduction via its interaction with RGS9-1 isoform. Acts as a membrane-anchor that mediates the targeting of RGS9-1 to the photoreceptor outer segment, where phototransduction takes place. Enhances the ability of RGS9-1 to stimulate G protein GTPase activity, allowing the visual signal to be terminated on the physiologically time scale. It also controls the proteolytic stability of RGS9-1, probably by protecting it from degradation. This Bos taurus (Bovine) protein is Regulator of G-protein signaling 9-binding protein (RGS9BP).